The primary structure comprises 200 residues: Putative biotin transporter BioYB (200 aa).

A run of 6 helical transmembrane segments spans residues 13-33, 36-56, 61-81, 90-110, 121-141, and 158-178; these read LIGMFAALMAVGANITSVAPF, VAGIPLSMQPFFCLLAALLLG, AIAMIVYALVGLAGAPVFAQF, GKSGGFIISYIPAAFAAGWFL, FLIASLIGTAIMYLIGTTYMY, and WGFMIWFMVKDTALAVILSFI.

Belongs to the BioY family.

The protein resides in the cell membrane. Its function is as follows. Putative biotin transporter. The protein is Putative biotin transporter BioYB (bioYB) of Bacillus subtilis (strain 168).